A 1036-amino-acid polypeptide reads, in one-letter code: Putative GPI-anchored protein pfl2 (1036 aa).

The N-terminal stretch at 1–23 (MKFFTASTLFLLAAQSLNSGVSA) is a signal peptide. 25 N-linked (GlcNAc...) asparagine glycosylation sites follow: N66, N97, N165, N201, N233, N259, N277, N296, N312, N331, N347, N363, N379, N395, N410, N429, N445, N461, N477, N493, N509, N524, N543, N559, and N573. Disordered regions lie at residues 88–130 (SSSL…SSLA) and 147–183 (SSLA…SLSS). The span at 243 to 585 (SSISSTVSSS…ITSSASGSTG (343 aa)) shows a compositional bias: low complexity. Residues 243-710 (SSISSTVSSS…PLSNSTVAPT (468 aa)) form a disordered region. Polar residues predominate over residues 586 to 595 (EFTNTNSGNG). A compositionally biased stretch (low complexity) spans 597 to 630 (VSGSVTTPTSTPLSNSTVAPTSTFTSSGFNTTSG). N611, N626, N642, N657, N673, N688, N704, N719, and N735 each carry an N-linked (GlcNAc...) asparagine glycan. Residues 631–647 (LPTSSASTPLSNSTVAP) show a composition bias toward polar residues. Low complexity predominate over residues 648 to 692 (TSTFTSSGFNTTSGLPTSSASTPSSNSSIVPTSTFTSSGFNTTSG). Residues 693–709 (LPTSSASTPLSNSTVAP) show a composition bias toward polar residues. Composition is skewed to low complexity over residues 722-831 (SGLP…TTAS), 838-862 (PTAA…ATYT), and 885-906 (IPVN…SFTP). 2 disordered regions span residues 722–862 (SGLP…ATYT) and 885–918 (IPVN…SYSN). N-linked (GlcNAc...) asparagine glycosylation is found at N918, N924, N930, N933, N939, N947, and N977. The tract at residues 978-1011 (TTATSGSDDDVKTASTSSSTSYTSSSSSSSSTTS) is disordered. Residues 990–1011 (TASTSSSTSYTSSSSSSSSTTS) are compositionally biased toward low complexity. S1011 carries the GPI-anchor amidated serine lipid modification. Residues 1012 to 1036 (AASSKASVSMGLNGLMIAAVILLVA) constitute a propeptide, removed in mature form.

It localises to the cell membrane. May be involved in agglutination during conjugation or other aspects of colony formation. Induces flocculation when overexpressed. The chain is Putative GPI-anchored protein pfl2 from Schizosaccharomyces pombe (strain 972 / ATCC 24843) (Fission yeast).